The following is a 185-amino-acid chain: Ribosome-recycling factor (185 aa).

The protein belongs to the RRF family.

It is found in the cytoplasm. Responsible for the release of ribosomes from messenger RNA at the termination of protein biosynthesis. May increase the efficiency of translation by recycling ribosomes from one round of translation to another. This chain is Ribosome-recycling factor, found in Zymomonas mobilis subsp. mobilis (strain ATCC 31821 / ZM4 / CP4).